We begin with the raw amino-acid sequence, 90 residues long: DNA-binding protein HU (90 aa).

Belongs to the bacterial histone-like protein family. As to quaternary structure, homodimer.

Histone-like DNA-binding protein which is capable of wrapping DNA to stabilize it, and thus to prevent its denaturation under extreme environmental conditions. The polypeptide is DNA-binding protein HU (hup) (Pasteurella multocida (strain Pm70)).